Consider the following 720-residue polypeptide: MLCRALLLRAAGHRQSSSLPLQHLLDGYRCSREDDHLSYGEIGMPVPPFGCSFSAAPNFEHVLAVANEEGFVRLYDTEAQNTTKLISKEWQAHSNAVFDLAWVPGEHRIVTASGDQTAKVWDVRAGELLGICKGHQCSLKSVAFSRFEKAVFCTGGRDGNIMVWDTRCNKKDGFYRQVNQISGAHNVVDRQTPSKLRKKRQNLRGLAPLVDFQQSVTVVLLQDEHTLISAGAVDGVIKVWDLRKNYAAYRQDPVPSKSFFYPGTSTRKLGYSSLVLDSTGANLFANCTDDSIYMFNMTSLKTFPVAVFSGHQNSTFYIKSSISPDDQFLVSGSSDCNAYIWKVSEPSLPPRILVGHSQEVTSIAWCPSDFTKIATCSDDNTVRIWRLQHYPEEEKSVSNKAKLVGWVTQKKPEEQRGAGRSASPQSTPAKAFSVGSPCASSPRPAACAPSYSGDLPLSTNTPTVSLKTQMATACTPAKLSGASPRTSPKLVPSSKMSIKHWIARTPCSSPEVGKKTPSPRKALAEVTQSLLETSSTPKAQHSQAEKRAKRRLDCSKEDEAGQKCLQDCSCVTELDHVAKKSKLNLCHLAAGQRACDEGSLSLADLDNEHEDSTHSPKELSFPGSLVNPSGTQTPPPVLQSPCERDSDVVDKENSSPERKNWLSALGEKLRTGKAGSPPSSYTSSAKRQEAAVVTTSPKTAVNTSVSMRKICTYFHRKPQN.

WD repeat units follow at residues 43–85 (GMPV…TTKL), 92–131 (AHSN…LLGI), and 134–174 (GHQC…KDGF). A DDB1-binding motif motif is present at residues 164–167 (WDTR). Residues 193–200 (PSKLRKKR) carry the Nuclear localization signal motif. WD repeat units lie at residues 211–250 (DFQQ…AAYR), 266–305 (TRKL…TFPV), 310–351 (GHQN…LPPR), and 355–395 (GHSQ…EEEK). A DDB1-binding motif motif is present at residues 240 to 243 (WDLR). Disordered regions lie at residues 411-437 (KPEE…VGSP), 476-495 (PAKL…PSSK), 528-552 (QSLL…KRRL), and 607-698 (NEHE…TSPK). Polar residues predominate over residues 528 to 542 (QSLLETSSTPKAQHS). 2 stretches are compositionally biased toward basic and acidic residues: residues 543–552 (QAEKRAKRRL) and 642–660 (CERD…ERKN).

This sequence belongs to the WD repeat cdt2 family. As to quaternary structure, component of the DCX(DTL) E3 ubiquitin ligase complex, at least composed of CUL4 (CUL4A or CUL4B), DDB1, DTL/CDT2 and RBX1.

The protein resides in the nucleus. The protein localises to the cytoplasm. Its subcellular location is the cytoskeleton. It localises to the microtubule organizing center. It is found in the centrosome. The protein resides in the chromosome. It participates in protein modification; protein ubiquitination. In terms of biological role, substrate-specific adapter of a DCX (DDB1-CUL4-X-box) E3 ubiquitin-protein ligase complex required for cell cycle control, DNA damage response and translesion DNA synthesis. The DCX(DTL) complex, also named CRL4(CDT2) complex, mediates the polyubiquitination and subsequent degradation of CDT1, CDKN1A/p21(CIP1), KMT5A and SDE2. CDT1 degradation in response to DNA damage is necessary to ensure proper cell cycle regulation of DNA replication. CDKN1A/p21(CIP1) degradation during S phase or following UV irradiation is essential to control replication licensing. KMT5A degradation is also important for a proper regulation of mechanisms such as TGF-beta signaling, cell cycle progression, DNA repair and cell migration. Most substrates require their interaction with PCNA for their polyubiquitination: substrates interact with PCNA via their PIP-box, and those containing the 'K+4' motif in the PIP box, recruit the DCX(DTL) complex, leading to their degradation. In undamaged proliferating cells, the DCX(DTL) complex also promotes the 'Lys-164' monoubiquitination of PCNA, thereby being involved in PCNA-dependent translesion DNA synthesis. May play a role in the regulation of the circadian clock. The sequence is that of Denticleless protein homolog (DTL) from Gallus gallus (Chicken).